The sequence spans 98 residues: Ribonuclease P protein component 4 (98 aa).

Residues cysteine 62, cysteine 65, cysteine 85, and cysteine 88 each coordinate Zn(2+).

The protein belongs to the eukaryotic/archaeal RNase P protein component 4 family. Consists of a catalytic RNA component and at least 4-5 protein subunits. It depends on Zn(2+) as a cofactor.

Its subcellular location is the cytoplasm. The enzyme catalyses Endonucleolytic cleavage of RNA, removing 5'-extranucleotides from tRNA precursor.. Functionally, part of ribonuclease P, a protein complex that generates mature tRNA molecules by cleaving their 5'-ends. The protein is Ribonuclease P protein component 4 of Thermoplasma volcanium (strain ATCC 51530 / DSM 4299 / JCM 9571 / NBRC 15438 / GSS1).